Consider the following 398-residue polypeptide: Palmitoyl-[acyl-carrier-protein] 4-desaturase 3, chloroplastic (398 aa).

The N-terminal 29 residues, 1–29 (MALRSLFLPNAFPNASSFRGGSRRGAAPR), are a transit peptide targeting the chloroplast. Fe cation contacts are provided by glutamate 139, glutamate 177, histidine 180, glutamate 230, glutamate 263, and histidine 266.

The protein belongs to the fatty acid desaturase type 2 family. In terms of assembly, homodimer. Fe(2+) serves as cofactor. Preferentially expressed in the flower labellum. Low expression in leaves.

Its subcellular location is the plastid. It localises to the chloroplast stroma. The enzyme catalyses hexadecanoyl-[ACP] + 2 reduced [2Fe-2S]-[ferredoxin] + O2 + 2 H(+) = (4Z)-hexadecenoyl-[ACP] + 2 oxidized [2Fe-2S]-[ferredoxin] + 2 H2O. The protein operates within lipid metabolism; fatty acid metabolism. Converts palmitoyl-ACP to (4Z)-hexadec-4-enoyl-ACP by introduction of a cis double bond between carbons 4 and 5 of the acyl chain. This chain is Palmitoyl-[acyl-carrier-protein] 4-desaturase 3, chloroplastic (SAD3), found in Ophrys arachnitiformis subsp. archipelagi (Orchid).